A 603-amino-acid chain; its full sequence is Probable GMP synthase [glutamine-hydrolyzing] (603 aa).

The Glutamine amidotransferase type-1 domain maps to 6–195 (KIAVVDFGGQ…FIQICGVSKT (190 aa)). Cys81 acts as the Nucleophile in catalysis. Residues His170 and Glu172 contribute to the active site. Positions 196 to 392 (WGIDQFLKEK…LGLESEWVGR (197 aa)) constitute a GMPS ATP-PPase domain. 224–230 (SGGVDST) is a binding site for ATP.

As to quaternary structure, homodimer.

It catalyses the reaction XMP + L-glutamine + ATP + H2O = GMP + L-glutamate + AMP + diphosphate + 2 H(+). It functions in the pathway purine metabolism; GMP biosynthesis; GMP from XMP (L-Gln route): step 1/1. Functionally, catalyzes the synthesis of GMP from XMP. This is Probable GMP synthase [glutamine-hydrolyzing] (guaA) from Leptospira interrogans serogroup Icterohaemorrhagiae serovar copenhageni (strain Fiocruz L1-130).